A 245-amino-acid polypeptide reads, in one-letter code: tRNA pseudouridine synthase A (245 aa).

Residue D52 is the Nucleophile of the active site. Y111 contacts substrate.

The protein belongs to the tRNA pseudouridine synthase TruA family. Homodimer.

It catalyses the reaction uridine(38/39/40) in tRNA = pseudouridine(38/39/40) in tRNA. Formation of pseudouridine at positions 38, 39 and 40 in the anticodon stem and loop of transfer RNAs. This Zymomonas mobilis subsp. mobilis (strain ATCC 31821 / ZM4 / CP4) protein is tRNA pseudouridine synthase A.